A 420-amino-acid chain; its full sequence is UDP-glucuronic acid decarboxylase 1 (420 aa).

Methionine 1 is modified (N-acetylmethionine). Residues 1 to 19 lie on the Cytoplasmic side of the membrane; the sequence is MVSKGLLRLVSSVNRRRMK. A helical; Signal-anchor for type II membrane protein transmembrane segment spans residues 20-40; the sequence is LLLGIALFAYAASVWGNFVNM. Over 41–420 the chain is Lumenal; that stretch reads RSIQENGELK…RVKKGRTRHS (380 aa). A Phosphothreonine modification is found at threonine 94. NAD(+) is bound by residues glycine 98, phenylalanine 99, valine 100, aspartate 119, asparagine 120, phenylalanine 122, threonine 123, glycine 124, aspartate 144, and valine 145. Positions 149 and 150 each coordinate UDP-alpha-D-glucuronate. NAD(+) contacts are provided by leucine 159 and serine 161. Lysine 177 lines the UDP-alpha-D-glucuronate pocket. Residue threonine 178 participates in NAD(+) binding. Asparagine 185, glycine 188, lysine 191, and arginine 192 together coordinate UDP-alpha-D-glucuronate. Residues alanine 200, tyrosine 231, and lysine 235 each coordinate NAD(+). Tyrosine 231 (proton acceptor) is an active-site residue. UDP-alpha-D-glucuronate contacts are provided by tyrosine 245, glutamine 248, and glutamate 249. Residues threonine 261, histidine 267, and arginine 272 each contribute to the NAD(+) site. Asparagine 316 carries an N-linked (GlcNAc...) asparagine glycan.

This sequence belongs to the NAD(P)-dependent epimerase/dehydratase family. UDP-glucuronic acid decarboxylase subfamily. In terms of assembly, homodimer and homotetramer. Interacts with AKT1. Requires NAD(+) as cofactor.

Its subcellular location is the golgi apparatus. It localises to the golgi stack membrane. The enzyme catalyses UDP-alpha-D-glucuronate + H(+) = UDP-alpha-D-xylose + CO2. It participates in nucleotide-sugar biosynthesis; UDP-alpha-D-xylose biosynthesis; UDP-alpha-D-xylose from UDP-alpha-D-glucuronate: step 1/1. Catalyzes the NAD-dependent decarboxylation of UDP-glucuronic acid to UDP-xylose. Necessary for the biosynthesis of the core tetrasaccharide in glycosaminoglycan biosynthesis. This chain is UDP-glucuronic acid decarboxylase 1 (Uxs1), found in Mus musculus (Mouse).